Consider the following 165-residue polypeptide: Dihydrofolate reductase type A13 (165 aa).

The DHFR domain maps to 7–162 (RIYLVAAMGA…ITYTHSVYAR (156 aa)).

This sequence belongs to the dihydrofolate reductase family. In terms of assembly, homodimer.

The enzyme catalyses (6S)-5,6,7,8-tetrahydrofolate + NADP(+) = 7,8-dihydrofolate + NADPH + H(+). The protein operates within cofactor biosynthesis; tetrahydrofolate biosynthesis; 5,6,7,8-tetrahydrofolate from 7,8-dihydrofolate: step 1/1. Functionally, key enzyme in folate metabolism. Catalyzes an essential reaction for de novo glycine and purine synthesis, and for DNA precursor synthesis. The chain is Dihydrofolate reductase type A13 (dfrA13) from Escherichia coli.